A 245-amino-acid chain; its full sequence is MKIDVLTLFPNMFTGVLNESILKRAQEKGAVTFQLVNFREFADNKHQTVDDYPYGGGAGMVLKPQPIFDAVDHVTKQSEHRPRVILLCPQGERYTQKKAEELAKERHIIFICGHYEGYDERIREHLVTDEISIGDYVLTGGELAAMVVIDSVVRLLPGVLGNEHSSMLDSYSSGLLEHPHYTRPADFRGMKVPDVLLSGNHRLIEEWRQKESLRRTWLRRPDLLETYELTEQQKKWIEQWKKNER.

S-adenosyl-L-methionine-binding positions include Gly113 and 133 to 138 (IGDYVL).

The protein belongs to the RNA methyltransferase TrmD family. Homodimer.

The protein resides in the cytoplasm. The enzyme catalyses guanosine(37) in tRNA + S-adenosyl-L-methionine = N(1)-methylguanosine(37) in tRNA + S-adenosyl-L-homocysteine + H(+). In terms of biological role, specifically methylates guanosine-37 in various tRNAs. The protein is tRNA (guanine-N(1)-)-methyltransferase of Anoxybacillus flavithermus (strain DSM 21510 / WK1).